The primary structure comprises 66 residues: Large ribosomal subunit protein bL28 (66 aa).

The interval 1 to 26 (MAKDAITGARTRFGNQRSHALNSSRR) is disordered. A compositionally biased stretch (polar residues) spans 13–25 (FGNQRSHALNSSR).

The protein belongs to the bacterial ribosomal protein bL28 family.

This chain is Large ribosomal subunit protein bL28, found in Leuconostoc citreum (strain KM20).